The chain runs to 1093 residues: Atos homolog protein A (1093 aa).

Residues 29–37 (ALLITEGRT) are transactivation domain 1 (TAD1). Disordered regions lie at residues 396-479 (AGRP…GNPL), 558-579 (SSKS…GESK), and 746-788 (HDNF…GSMR). Residues 746–763 (HDNFKNKNRQDKTKAAHD) show a composition bias toward basic and acidic residues. Residues 895–952 (LLGNFEESVLNFRLDPLGIVEGFTAEVGASGVFCPTHMTLPVEVSFYSVSDDNAPSPY) are required for macropage invasion. The tract at residues 979 to 987 (FNPNKTVVK) is transactivation domain 2 (TAD2).

Belongs to the ATOS family.

The protein localises to the nucleus. Functionally, transcription regulator that syncronizes transcriptional and translational programs to promote macrophage invasion of tissues. This is Atos homolog protein A (ATOSA) from Gallus gallus (Chicken).